The chain runs to 145 residues: D-aminoacyl-tRNA deacylase (145 aa).

The Gly-cisPro motif, important for rejection of L-amino acids signature appears at 137–138; that stretch reads GP.

Belongs to the DTD family. In terms of assembly, homodimer.

Its subcellular location is the cytoplasm. It catalyses the reaction glycyl-tRNA(Ala) + H2O = tRNA(Ala) + glycine + H(+). The enzyme catalyses a D-aminoacyl-tRNA + H2O = a tRNA + a D-alpha-amino acid + H(+). In terms of biological role, an aminoacyl-tRNA editing enzyme that deacylates mischarged D-aminoacyl-tRNAs. Also deacylates mischarged glycyl-tRNA(Ala), protecting cells against glycine mischarging by AlaRS. Acts via tRNA-based rather than protein-based catalysis; rejects L-amino acids rather than detecting D-amino acids in the active site. By recycling D-aminoacyl-tRNA to D-amino acids and free tRNA molecules, this enzyme counteracts the toxicity associated with the formation of D-aminoacyl-tRNA entities in vivo and helps enforce protein L-homochirality. This Sodalis glossinidius (strain morsitans) protein is D-aminoacyl-tRNA deacylase.